A 534-amino-acid polypeptide reads, in one-letter code: Cytochrome P450 monooxygenase ascG (534 aa).

A helical transmembrane segment spans residues 13–33 (FVASFPALSAAAGLIVAISFI). The N-linked (GlcNAc...) asparagine glycan is linked to Asn466. Cys469 is a binding site for heme.

This sequence belongs to the cytochrome P450 family. Requires heme as cofactor.

It is found in the membrane. The enzyme catalyses ilicicolin C + NADPH + O2 + H(+) = ascochlorin + NADP(+) + 2 H2O. Its pathway is secondary metabolite biosynthesis; terpenoid biosynthesis. Its function is as follows. Cytochrome P450 monooxygenase; part of the asc-1 gene cluster that mediates the biosynthesis of both ascochlorin and ascofuranone, a strong inhibitor of cyanide-insensitive alternative oxidases and a promising drug candidate against African trypanosomiasis. The first step in the pathway is performed by the non-reducing polyketide synthase ascC that produces orsellinic acid by condensing acetyl-CoA with 3 malonyl-CoA units. Orsellinic acid is then prenylated by the prenyltransferase ascA to yield ilicicolinic acid B. Ilicicolinic acid B is further reduced to ilicicolin B by the reductase ascB. The halogenase ascD then chlorinates ilicicolin B to produce ilicicolin A which is converted to ilicicolin A epoxide by the cytochrome P450 monooxygenase ascE that catalyzes stereoselective epoxidation of the terminal double bond of the prenyl group. Ilicicolin A epoxide is the last common precursor for the biosynthesis of ascofuranone and ascochlorin. The terpene cyclase ascF produces a monocyclic terpene, and the cyclization reaction is proposed to be initiated by protonation of the terminal epoxide of ilicicolin A epoxide to generate a monocyclic tertiarycation, which is followed by a series of hydride and methyl shifts with abstraction of proton, leading to the formation of the (14S,15R,19R)-trimethylcyclohexanone ring structure of ilicicolin C, which is finally reduced to ascochlorin by the dehydrogenase ascG. On the other hand, ilicicolin A epoxide is hydroxylated by the cytochrome P450 monooxygenase ascH, and the resultant product is cyclized by the terpene cyclase ascI to ascofuranol via protonation-initiated epoxide ring opening, which facilitates the 6-endo-tet cyclization to form the tetrahy-drofuran ring. Finally, ascofuranol is oxidized into ascofuranone by ascJ. The polypeptide is Cytochrome P450 monooxygenase ascG (Acremonium egyptiacum (Oospora egyptiaca)).